Consider the following 119-residue polypeptide: DNA-binding protein TubR (119 aa).

In terms of assembly, homodimer. Binds to TubZ filaments via the C-terminus of TubZ. DNA is not required for binding to TubZ.

Its function is as follows. A DNA-binding protein that is part of the type III plasmid partition system used to ensure correct segregation of the pBc10987 plasmid. Binds TubZ filaments but does not influence the GTPase activity of TubZ with or without DNA. Cooperatively binds to multiple regions in tubC (centromere-like site) upstream of its own gene with consensus sequence N(T/A)ATTNC(C/G)GNAAT(A/T)N; probably forms an extended DNA-protein filament. Binds sites in its own promoter region and presumably represses its expression; its effect on RNA expression has not been shown. Does not specifically bind to the putative origin of replication on pBc10987. The chain is DNA-binding protein TubR from Bacillus cereus (strain ATCC 10987 / NRS 248).